The sequence spans 74 residues: Guanine nucleotide-binding protein G(T) subunit gamma-T1 (74 aa).

C71 carries the post-translational modification Cysteine methyl ester. The S-farnesyl cysteine moiety is linked to residue C71. The propeptide at 72–74 is removed in mature form; it reads VIS.

It belongs to the G protein gamma family. G proteins are composed of 3 units, alpha, beta and gamma. In terms of tissue distribution, retinal rod outer segment.

It is found in the cell membrane. Functionally, guanine nucleotide-binding proteins (G proteins) are involved as a modulator or transducer in various transmembrane signaling systems. The beta and gamma chains are required for the GTPase activity, for replacement of GDP by GTP, and for G protein-effector interaction. The protein is Guanine nucleotide-binding protein G(T) subunit gamma-T1 (GNGT1) of Canis lupus familiaris (Dog).